The following is a 692-amino-acid chain: MGVQGLKTYIESSSRNDLKTWAFRDKQLIIDGCNLFYSLCFDSNLDQIHGGDYDTFEKVVRQFFENLSACDVHPYVVIDGGDDHTDKKWDTLLTRKQKKIKDAYDLSVGKRRQVLPLLTEKVFKQVLKKLKVPVVQTLEEADWEIAALAEEWNCPVLSNDSDFYIFNLRAGLLPITHFHWRKVRVNRKTNQKFILSKHFIARKFCKSFKMNVSLLPVFASILGNDYVKLPNIKNRHWERYSNPGSENPQIEGLLNWLSQFSGPDEAISALLRPTSNKTKAQEELSHGIQDYKLVPGSLAQIFRSTKVPQKISKGPLHVLPRWTLRPILDGKMSSYIINVLLHNRASLNAQVEDFQLPSANETSLHIRQVFYGLLLLGEQQTAGKRESVKGTTKRYVVEYSRQQIKRSSENVEAIQTKAMEGLRLETLYQEPHAVRLQVILDTLGVSCEMLKGTPDALQLQMFVTRYWLVNAEPQPCRVHLWGLLLGMVYGKLSSSPNAQKDMLSRLRVKASRKGGSVDIDVAHAYSQWQSCLKYSLNLNYLLSFPLTEPDCASLYRGSLVHQAVGELRRGISLEALLVKGSSAERIFKQLKDIIVSLMGDDFIKKMKSGLEHRDAGKTQRASKGQKDELDIYFEQMMIESIDSEDEELLDVRKSKAKNHLMELPVCPIRARHKAKARNARHPCKKYERRCFE.

This sequence belongs to the asteroid family.

Functionally, structure-specific DNA endonuclease that specifically cleaves single-stranded DNA and 3' overhang DNA. The chain is Single-strand DNA endonuclease ASTE1 (aste1a) from Danio rerio (Zebrafish).